The primary structure comprises 227 residues: uncharacterized protein (227 aa).

It belongs to the flavoredoxin family. It depends on FMN as a cofactor.

This is an uncharacterized protein from Deinococcus radiodurans (strain ATCC 13939 / DSM 20539 / JCM 16871 / CCUG 27074 / LMG 4051 / NBRC 15346 / NCIMB 9279 / VKM B-1422 / R1).